Consider the following 99-residue polypeptide: UPF0235 protein Sbal223_1335 (99 aa).

Belongs to the UPF0235 family.

The sequence is that of UPF0235 protein Sbal223_1335 from Shewanella baltica (strain OS223).